The sequence spans 102 residues: Large ribosomal subunit protein bL21 (102 aa).

This sequence belongs to the bacterial ribosomal protein bL21 family. Part of the 50S ribosomal subunit. Contacts protein L20.

Its function is as follows. This protein binds to 23S rRNA in the presence of protein L20. This is Large ribosomal subunit protein bL21 from Bacillus licheniformis (strain ATCC 14580 / DSM 13 / JCM 2505 / CCUG 7422 / NBRC 12200 / NCIMB 9375 / NCTC 10341 / NRRL NRS-1264 / Gibson 46).